A 187-amino-acid polypeptide reads, in one-letter code: dTTP/UTP pyrophosphatase (187 aa).

The Proton acceptor role is filled by Asp65.

This sequence belongs to the Maf family. YhdE subfamily. A divalent metal cation serves as cofactor.

The protein localises to the cytoplasm. It carries out the reaction dTTP + H2O = dTMP + diphosphate + H(+). The catalysed reaction is UTP + H2O = UMP + diphosphate + H(+). Nucleoside triphosphate pyrophosphatase that hydrolyzes dTTP and UTP. May have a dual role in cell division arrest and in preventing the incorporation of modified nucleotides into cellular nucleic acids. This chain is dTTP/UTP pyrophosphatase, found in Deinococcus geothermalis (strain DSM 11300 / CIP 105573 / AG-3a).